A 402-amino-acid chain; its full sequence is MAATRRPGRNHLFVPGPTNIPDRVMRAMMVQSEDHRSVDFPSLTKPLFEDTKKVFGSTEGTIFLFPASGTGIWESALSNTLARGDKVLAARFGQFSHLWIDMAQRLGLDVVVQEEEWGTGAKPEKIEEALRADKNHEIKAVMVVHNETATGVTSNIGAVRKAIDAAGHPALLFVDGVSSIGSLPFKADEWKVDCAIAGSQKGLMLPAGLGVICVSQKALKAAEGQSGRNDRLARVYFDWEDQKKQNPTGYFPYTPPLPLLYGLREALACLFEEGLENVYHRHAVLGEATRQAVAAWGLKTCAKSPEWNSDTVTAILAPEGVDAAKIIKHAYVRYNLALGAGLSQVAGKVFRIGHVGDLNELSLLGAIAGAEMSLIDNGVKVTPGSGVAAASSYLRENPLAKA.

Position 201 is an N6-(pyridoxal phosphate)lysine (lysine 201).

The protein belongs to the class-V pyridoxal-phosphate-dependent aminotransferase family. It depends on pyridoxal 5'-phosphate as a cofactor.

The catalysed reaction is glyoxylate + L-serine = 3-hydroxypyruvate + glycine. The protein operates within one-carbon metabolism; formaldehyde assimilation via serine pathway. This is Serine--glyoxylate aminotransferase from Methylorubrum extorquens (strain ATCC 14718 / DSM 1338 / JCM 2805 / NCIMB 9133 / AM1) (Methylobacterium extorquens).